Consider the following 1070-residue polypeptide: DNA-directed RNA polymerase subunit beta (1070 aa).

This sequence belongs to the RNA polymerase beta chain family. As to quaternary structure, in plastids the minimal PEP RNA polymerase catalytic core is composed of four subunits: alpha, beta, beta', and beta''. When a (nuclear-encoded) sigma factor is associated with the core the holoenzyme is formed, which can initiate transcription.

Its subcellular location is the plastid. The protein resides in the chloroplast. The enzyme catalyses RNA(n) + a ribonucleoside 5'-triphosphate = RNA(n+1) + diphosphate. Functionally, DNA-dependent RNA polymerase catalyzes the transcription of DNA into RNA using the four ribonucleoside triphosphates as substrates. This chain is DNA-directed RNA polymerase subunit beta, found in Liriodendron tulipifera (Tuliptree).